The following is a 361-amino-acid chain: 3-dehydroquinate synthase (361 aa).

NAD(+) contacts are provided by residues 72-77, 130-131, lysine 142, and lysine 151; these read SGEKEK and TT. The Zn(2+) site is built by glutamate 184, histidine 247, and histidine 264.

The protein belongs to the sugar phosphate cyclases superfamily. Dehydroquinate synthase family. It depends on NAD(+) as a cofactor. Requires Co(2+) as cofactor. Zn(2+) is required as a cofactor.

Its subcellular location is the cytoplasm. It catalyses the reaction 7-phospho-2-dehydro-3-deoxy-D-arabino-heptonate = 3-dehydroquinate + phosphate. The protein operates within metabolic intermediate biosynthesis; chorismate biosynthesis; chorismate from D-erythrose 4-phosphate and phosphoenolpyruvate: step 2/7. Catalyzes the conversion of 3-deoxy-D-arabino-heptulosonate 7-phosphate (DAHP) to dehydroquinate (DHQ). This Bacillus cereus (strain ATCC 14579 / DSM 31 / CCUG 7414 / JCM 2152 / NBRC 15305 / NCIMB 9373 / NCTC 2599 / NRRL B-3711) protein is 3-dehydroquinate synthase.